Consider the following 635-residue polypeptide: Threonine--tRNA ligase (635 aa).

Residues methionine 1–threonine 61 enclose the TGS domain. The catalytic stretch occupies residues aspartate 242–proline 533. The Zn(2+) site is built by cysteine 333, histidine 384, and histidine 510.

It belongs to the class-II aminoacyl-tRNA synthetase family. Homodimer. It depends on Zn(2+) as a cofactor.

The protein localises to the cytoplasm. It carries out the reaction tRNA(Thr) + L-threonine + ATP = L-threonyl-tRNA(Thr) + AMP + diphosphate + H(+). Catalyzes the attachment of threonine to tRNA(Thr) in a two-step reaction: L-threonine is first activated by ATP to form Thr-AMP and then transferred to the acceptor end of tRNA(Thr). Also edits incorrectly charged L-seryl-tRNA(Thr). The chain is Threonine--tRNA ligase from Methylibium petroleiphilum (strain ATCC BAA-1232 / LMG 22953 / PM1).